A 355-amino-acid polypeptide reads, in one-letter code: Probable butyrate kinase (355 aa).

The protein belongs to the acetokinase family.

It localises to the cytoplasm. The catalysed reaction is butanoate + ATP = butanoyl phosphate + ADP. The sequence is that of Probable butyrate kinase from Listeria innocua serovar 6a (strain ATCC BAA-680 / CLIP 11262).